A 239-amino-acid chain; its full sequence is Ribonuclease 3 (239 aa).

One can recognise an RNase III domain in the interval 11–133; that stretch reads HAAIQKKLGY…MFAAVSFDAD (123 aa). Residue glutamate 46 coordinates Mg(2+). Aspartate 50 is a catalytic residue. Positions 119 and 122 each coordinate Mg(2+). The 71-residue stretch at 160-230 folds into the DRBM domain; that stretch reads DGKTALQEAL…AKEALKWLEE (71 aa).

Belongs to the ribonuclease III family. As to quaternary structure, homodimer. Mg(2+) is required as a cofactor.

Its subcellular location is the cytoplasm. It carries out the reaction Endonucleolytic cleavage to 5'-phosphomonoester.. Functionally, digests double-stranded RNA. Involved in the processing of primary rRNA transcript to yield the immediate precursors to the large and small rRNAs (23S and 16S). Also processes some mRNAs, and tRNAs when they are encoded in the rRNA operon. Its function is as follows. CRISPR (clustered regularly interspaced short palindromic repeat) is an adaptive immune system that provides protection against mobile genetic elements (viruses, transposable elements and conjugative plasmids). CRISPR clusters contain spacers, sequences complementary to antecedent mobile elements, and target invading nucleic acids. CRISPR clusters are transcribed and processed into CRISPR RNA (crRNA). In this organism endogenous ribonuclease 3 and Cas9 are required for correct coprocessing of pre-crRNA and the trans-encoded small RNA (tracrRNA). Cas9, crRNA and tracRNA are required for cleavage of invading DNA. Involved in 3'-end processing but not 5'-end processing of crRNA and tracrRNA. The chain is Ribonuclease 3 from Neisseria meningitidis serogroup C (strain 8013).